The primary structure comprises 76 residues: ATP synthase subunit c (76 aa).

A run of 2 helical transmembrane segments spans residues leucine 13 to phenylalanine 33 and phenylalanine 55 to isoleucine 75.

The protein belongs to the ATPase C chain family. F-type ATPases have 2 components, F(1) - the catalytic core - and F(0) - the membrane proton channel. F(1) has five subunits: alpha(3), beta(3), gamma(1), delta(1), epsilon(1). F(0) has three main subunits: a(1), b(2) and c(10-14). The alpha and beta chains form an alternating ring which encloses part of the gamma chain. F(1) is attached to F(0) by a central stalk formed by the gamma and epsilon chains, while a peripheral stalk is formed by the delta and b chains.

It localises to the cell membrane. Functionally, f(1)F(0) ATP synthase produces ATP from ADP in the presence of a proton or sodium gradient. F-type ATPases consist of two structural domains, F(1) containing the extramembraneous catalytic core and F(0) containing the membrane proton channel, linked together by a central stalk and a peripheral stalk. During catalysis, ATP synthesis in the catalytic domain of F(1) is coupled via a rotary mechanism of the central stalk subunits to proton translocation. Its function is as follows. Key component of the F(0) channel; it plays a direct role in translocation across the membrane. A homomeric c-ring of between 10-14 subunits forms the central stalk rotor element with the F(1) delta and epsilon subunits. The sequence is that of ATP synthase subunit c from Bifidobacterium longum subsp. infantis (strain ATCC 15697 / DSM 20088 / JCM 1222 / NCTC 11817 / S12).